Here is a 307-residue protein sequence, read N- to C-terminus: Acetaldehyde dehydrogenase (307 aa).

NAD(+) is bound at residue 12-15 (SGNI). Residue cysteine 127 is the Acyl-thioester intermediate of the active site. NAD(+) contacts are provided by residues 158-166 (SAGPGTRQN) and asparagine 278.

Belongs to the acetaldehyde dehydrogenase family. As to quaternary structure, monomer. Can also form a heterotetramer composed of two aldolase (TTHB246) and two dehydrogenase (TTHB247) subunits. Upon complex formation, the aldolase shows a 5-fold increase in substrate affinity, while the dehydrogenase shows a 3-fold decrease; the kcat values of each enzyme are reduced by 2-fold when they are in a complex.

The enzyme catalyses acetaldehyde + NAD(+) + CoA = acetyl-CoA + NADH + H(+). The catalysed reaction is propanal + NAD(+) + CoA = propanoyl-CoA + NADH + H(+). In terms of biological role, catalyzes the conversion of acetaldehyde or propanal to acetyl-CoA or propanoyl-CoA, respectively, using NAD(+) and coenzyme A. The aldehyde substrates can be directly channeled from the aldolase TTHB246 to the dehydrogenase TTHB247. Is the final enzyme in the meta-cleavage pathway for the degradation of aromatic compounds. The sequence is that of Acetaldehyde dehydrogenase from Thermus thermophilus (strain ATCC 27634 / DSM 579 / HB8).